The chain runs to 65 residues: Large ribosomal subunit protein bL35 (65 aa).

Residues 1 to 16 (MPKMKTKSGAKKRFRV) are compositionally biased toward basic residues. The tract at residues 1 to 25 (MPKMKTKSGAKKRFRVRPGGTVKRG) is disordered.

Belongs to the bacterial ribosomal protein bL35 family.

This is Large ribosomal subunit protein bL35 from Herminiimonas arsenicoxydans.